The following is a 225-amino-acid chain: NAD(P)H-quinone oxidoreductase subunit K, chloroplastic (225 aa).

Positions 43, 44, 108, and 139 each coordinate [4Fe-4S] cluster.

The protein belongs to the complex I 20 kDa subunit family. As to quaternary structure, NDH is composed of at least 16 different subunits, 5 of which are encoded in the nucleus. The cofactor is [4Fe-4S] cluster.

It is found in the plastid. Its subcellular location is the chloroplast thylakoid membrane. It carries out the reaction a plastoquinone + NADH + (n+1) H(+)(in) = a plastoquinol + NAD(+) + n H(+)(out). The enzyme catalyses a plastoquinone + NADPH + (n+1) H(+)(in) = a plastoquinol + NADP(+) + n H(+)(out). NDH shuttles electrons from NAD(P)H:plastoquinone, via FMN and iron-sulfur (Fe-S) centers, to quinones in the photosynthetic chain and possibly in a chloroplast respiratory chain. The immediate electron acceptor for the enzyme in this species is believed to be plastoquinone. Couples the redox reaction to proton translocation, and thus conserves the redox energy in a proton gradient. The sequence is that of NAD(P)H-quinone oxidoreductase subunit K, chloroplastic from Liriodendron tulipifera (Tuliptree).